The primary structure comprises 325 residues: Thiamine-monophosphate kinase (325 aa).

Residues Asp30, Ser45, Thr46, and Asp47 each contribute to the Mg(2+) site. His54 contributes to the substrate binding site. Residues Asp75 and Asp122 each contribute to the Mg(2+) site. ATP contacts are provided by residues Gly121–Asp122 and Arg146. Asp212 contacts Mg(2+). ATP is bound at residue Ser214. Asp215 contacts Mg(2+). Substrate-binding residues include Glu263 and Tyr319.

Belongs to the thiamine-monophosphate kinase family.

It catalyses the reaction thiamine phosphate + ATP = thiamine diphosphate + ADP. Its pathway is cofactor biosynthesis; thiamine diphosphate biosynthesis; thiamine diphosphate from thiamine phosphate: step 1/1. Its activity is regulated as follows. Is markedly activated by the monovalent cations K(+), NH(4)(+), and Rb(+). Is significantly inhibited by ADP, AMP, p-chloromercuribenzoate, N-ethylmaleimide, pyrophosphate, and EDTA. In terms of biological role, catalyzes the ATP-dependent phosphorylation of thiamine-monophosphate (TMP) to form thiamine-pyrophosphate (TPP), the active form of vitamin B1. Cannot use thiamine as substrate. Is highly specific for ATP as phosphate donor. The chain is Thiamine-monophosphate kinase (thiL) from Escherichia coli (strain K12).